The following is a 90-amino-acid chain: Small ribosomal subunit protein bS16 (90 aa).

The protein belongs to the bacterial ribosomal protein bS16 family. As to quaternary structure, part of the 30S ribosomal subunit.

The protein is Small ribosomal subunit protein bS16 of Bacillus subtilis (strain 168).